A 262-amino-acid chain; its full sequence is Carbohydrate deacetylase (262 aa).

Mg(2+) is bound at residue H129.

Belongs to the YdjC deacetylase family. As to quaternary structure, homodimer. Mg(2+) is required as a cofactor.

Its function is as follows. Probably catalyzes the deacetylation of acetylated carbohydrates an important step in the degradation of oligosaccharides. The sequence is that of Carbohydrate deacetylase from Enterococcus faecalis (strain ATCC 700802 / V583).